A 186-amino-acid polypeptide reads, in one-letter code: Serine hydrolase RBBP9 (186 aa).

The tract at residues 63-67 (LHCDE) is involved in binding to RB1. Residues Ser75, Asp138, and His165 each act as charge relay system in the active site.

Belongs to the RBBP9 family. In terms of assembly, interacts with RB1; the interaction disrupts RB1 binding to E2F1. Interacts with RBL1 and RBL2. Highly expressed in the spleen, testis and kidney. Also found in the heart, liver, lung and brain.

The enzyme catalyses valacyclovir + H2O = acyclovir + L-valine + H(+). Functionally, serine hydrolase. Catalyzes the hydrolytic activation of amino acid ester of the antiviral prodrug valacyclovir to its corresponding active drug, acyclovir. May negatively regulate basal or autocrine TGF-beta signaling by suppressing SMAD2-SMAD3 phosphorylation. May play a role in the transformation process due to its capacity to confer resistance to the growth-inhibitory effects of TGF-beta through interaction with RB1 and the subsequent displacement of E2F1. The sequence is that of Serine hydrolase RBBP9 from Rattus norvegicus (Rat).